Consider the following 77-residue polypeptide: Exodeoxyribonuclease 7 small subunit (77 aa).

It belongs to the XseB family. Heterooligomer composed of large and small subunits.

Its subcellular location is the cytoplasm. It catalyses the reaction Exonucleolytic cleavage in either 5'- to 3'- or 3'- to 5'-direction to yield nucleoside 5'-phosphates.. Functionally, bidirectionally degrades single-stranded DNA into large acid-insoluble oligonucleotides, which are then degraded further into small acid-soluble oligonucleotides. This Lysinibacillus sphaericus (strain C3-41) protein is Exodeoxyribonuclease 7 small subunit.